A 318-amino-acid polypeptide reads, in one-letter code: Ribose-phosphate pyrophosphokinase (318 aa).

ATP is bound by residues 46–48 and 105–106; these read DGE and RQ. Mg(2+) is bound by residues His139 and Asp178. Lys201 is an active-site residue. Residues Arg203, Asp227, and 231-235 each bind D-ribose 5-phosphate; that span reads DTAGT.

Belongs to the ribose-phosphate pyrophosphokinase family. Class I subfamily. As to quaternary structure, homohexamer. Mg(2+) serves as cofactor.

It is found in the cytoplasm. It catalyses the reaction D-ribose 5-phosphate + ATP = 5-phospho-alpha-D-ribose 1-diphosphate + AMP + H(+). It participates in metabolic intermediate biosynthesis; 5-phospho-alpha-D-ribose 1-diphosphate biosynthesis; 5-phospho-alpha-D-ribose 1-diphosphate from D-ribose 5-phosphate (route I): step 1/1. In terms of biological role, involved in the biosynthesis of the central metabolite phospho-alpha-D-ribosyl-1-pyrophosphate (PRPP) via the transfer of pyrophosphoryl group from ATP to 1-hydroxyl of ribose-5-phosphate (Rib-5-P). The sequence is that of Ribose-phosphate pyrophosphokinase from Helicobacter pylori (strain J99 / ATCC 700824) (Campylobacter pylori J99).